A 508-amino-acid chain; its full sequence is Photosystem II CP47 reaction center protein (508 aa).

Transmembrane regions (helical) follow at residues 21–36, 101–115, 140–156, 203–218, 237–252, and 457–472; these read SVHI…WAGS, IVFS…IWHW, GIHL…FGAF, IAAG…FHLS, VLSS…AFVV, and SFAL…HGAR.

This sequence belongs to the PsbB/PsbC family. PsbB subfamily. PSII is composed of 1 copy each of membrane proteins PsbA, PsbB, PsbC, PsbD, PsbE, PsbF, PsbH, PsbI, PsbJ, PsbK, PsbL, PsbM, PsbT, PsbX, PsbY, PsbZ, Psb30/Ycf12, at least 3 peripheral proteins of the oxygen-evolving complex and a large number of cofactors. It forms dimeric complexes. Requires Binds multiple chlorophylls. PSII binds additional chlorophylls, carotenoids and specific lipids. as cofactor.

It localises to the plastid. Its subcellular location is the chloroplast thylakoid membrane. In terms of biological role, one of the components of the core complex of photosystem II (PSII). It binds chlorophyll and helps catalyze the primary light-induced photochemical processes of PSII. PSII is a light-driven water:plastoquinone oxidoreductase, using light energy to abstract electrons from H(2)O, generating O(2) and a proton gradient subsequently used for ATP formation. The protein is Photosystem II CP47 reaction center protein of Manihot esculenta (Cassava).